A 156-amino-acid chain; its full sequence is uncharacterized protein (156 aa).

One can recognise an N-acetyltransferase domain in the interval 11–156; that stretch reads EEFRSYLTYT…ETDVVMSKKL (146 aa).

Belongs to the acetyltransferase family. In terms of assembly, homodimer.

This is an uncharacterized protein from Bacillus subtilis (strain 168).